The chain runs to 307 residues: Small ribosomal subunit biogenesis GTPase RsgA (307 aa).

The 158-residue stretch at 80 to 237 folds into the CP-type G domain; sequence KADLRQTIVS…IVDTPGIKEF (158 aa). GTP contacts are provided by residues 129–132 and 180–188; these read NKID and GQSGVGKSS. Zn(2+)-binding residues include cysteine 261, cysteine 266, histidine 268, and cysteine 274.

Belongs to the TRAFAC class YlqF/YawG GTPase family. RsgA subfamily. As to quaternary structure, monomer. Associates with 30S ribosomal subunit, binds 16S rRNA. Zn(2+) is required as a cofactor.

The protein resides in the cytoplasm. Functionally, one of several proteins that assist in the late maturation steps of the functional core of the 30S ribosomal subunit. Helps release RbfA from mature subunits. May play a role in the assembly of ribosomal proteins into the subunit. Circularly permuted GTPase that catalyzes slow GTP hydrolysis, GTPase activity is stimulated by the 30S ribosomal subunit. This chain is Small ribosomal subunit biogenesis GTPase RsgA, found in Borreliella burgdorferi (strain ATCC 35210 / DSM 4680 / CIP 102532 / B31) (Borrelia burgdorferi).